Reading from the N-terminus, the 162-residue chain is UPF0114 protein PSEEN0819 (162 aa).

The next 3 membrane-spanning stretches (helical) occupy residues 15–35 (LLAPIYFGLSLGLLALALKFF), 53–73 (LVLVILSLIDMSLVGGLLVMV), and 136–156 (LMWYVIIHMTFVVSAFVMGYL).

Belongs to the UPF0114 family.

The protein localises to the cell membrane. This is UPF0114 protein PSEEN0819 from Pseudomonas entomophila (strain L48).